We begin with the raw amino-acid sequence, 152 residues long: Isoquinoline 1-oxidoreductase subunit alpha (152 aa).

The region spanning 1–77 (MIEFILNGQP…RQSVTTIEGL (77 aa)) is the 2Fe-2S ferredoxin-type domain. Residues cysteine 39, cysteine 44, and cysteine 47 each contribute to the [2Fe-2S] cluster site.

In terms of assembly, heterodimer of an alpha chain and a beta chain.

The catalysed reaction is isoquinoline + A + H2O = isoquinolin-1(2H)-one + AH2. Specific towards N-containing N-heterocyclic substrates, including isoquinoline, isoquinolin-5-ol, phthalazine and quinazoline. The sequence is that of Isoquinoline 1-oxidoreductase subunit alpha (iorA) from Brevundimonas diminuta (Pseudomonas diminuta).